Consider the following 537-residue polypeptide: Cytochrome bd ubiquinol oxidase subunit 1 (537 aa).

Topologically, residues 1–24 are cytoplasmic; it reads MISESVVDLSRLQFAMTALYHFLF. Residue H21 participates in heme b binding. A helical membrane pass occupies residues 25-44; the sequence is VPLTLGMTFLLAIMESVYVM. The Periplasmic portion of the chain corresponds to 45-96; sequence TGKQVYKDMVKFWGKLFGINFALGVTTGITMEFQFGTNWAYYSHYVGDIFGA. The chain crosses the membrane as a helical span at residues 97–116; the sequence is PLAIEGLTAFFLESTFIGMF. The Cytoplasmic segment spans residues 117–131; sequence FFGWDRLSKIQHLAV. A helical membrane pass occupies residues 132-151; that stretch reads TWLVALGSNLSALWILVANG. The Periplasmic portion of the chain corresponds to 152–189; it reads WMQHPVGAEFNFETMRMELVDFGALLLNPVAQVKFVHT. H188 is a heme b binding site. Residues 190-209 traverse the membrane as a helical segment; sequence VASGYVTGAVFVLAISSYYL. The Cytoplasmic portion of the chain corresponds to 210–221; sequence LKKRDLGFARRS. A helical transmembrane segment spans residues 222 to 241; that stretch reads FAIASAFGMASILSVIVLGD. At 242–394 the chain is on the periplasmic side; that stretch reads ESGYEVGEVQ…VASMFWSFRA (153 aa). M395 is a binding site for heme b. A helical transmembrane segment spans residues 395–414; that stretch reads MVGAGFAMLILFVCAFWASA. At 415–472 the chain is on the cytoplasmic side; it reads RKNEESKPWLLKFALYSLPLPWIATQTGWFVAEHGRQPWTIGGVLPTHLSASSLSTGD. A helical membrane pass occupies residues 473 to 492; it reads LWGSLIALIAFYTLLLVVEM. The Periplasmic portion of the chain corresponds to 493-537; that stretch reads YLMIRFARLGPSSLHTGRYHFEQLEQHAVKHASPSQADPQQPVNA.

The protein belongs to the cytochrome ubiquinol oxidase subunit 1 family. Heterodimer of subunits I and II. Requires heme b as cofactor. Heme d cis-diol is required as a cofactor.

Its subcellular location is the cell inner membrane. It carries out the reaction 2 a ubiquinol + O2(in) + 4 H(+)(in) = 2 a ubiquinone + 2 H2O(in) + 4 H(+)(out). Functionally, may be involved in maintaining the low intracellular oxygen concentration required for nitrogen fixation. This chain is Cytochrome bd ubiquinol oxidase subunit 1 (cydA), found in Azotobacter vinelandii.